An 87-amino-acid polypeptide reads, in one-letter code: Small ribosomal subunit protein bS21m (87 aa).

This sequence belongs to the bacterial ribosomal protein bS21 family. In terms of assembly, component of the mitochondrial ribosome small subunit (28S) which comprises a 12S rRNA and about 30 distinct proteins.

The protein resides in the mitochondrion. This Mus musculus (Mouse) protein is Small ribosomal subunit protein bS21m (Mrps21).